Reading from the N-terminus, the 305-residue chain is MKIAIVGGPTAVGKTDIMIEVCEEIGAEIISMDSRQIYRYMDIGTAKPTPEQRKRVPHHMIDILDPDEYYNAFLYRKDSLKAVEAILKRGKIPVYVGGTGLYADALVRGIFEGVPADENIRKELRELERREPGILRKMLEEFDPEAATRIHPNDLKRTIRALEVYMKTGRRISELQKETKGDDRFFIIVLTRERYDLYDRINRRVDRMIEMGLVDEVKRLLSMGYSKDLNSMKTIGYKEVIEYLEGKYDFEKMVHLIKRNTRHFARRQIIWFKRYENAIWYNLTFVSKEELKKTLKELIVKNFSV.

Position 8-15 (8-15 (GPTAVGKT)) interacts with ATP. 10-15 (TAVGKT) provides a ligand contact to substrate. An interaction with substrate tRNA region spans residues 33-36 (DSRQ).

This sequence belongs to the IPP transferase family. As to quaternary structure, monomer. Requires Mg(2+) as cofactor.

The catalysed reaction is adenosine(37) in tRNA + dimethylallyl diphosphate = N(6)-dimethylallyladenosine(37) in tRNA + diphosphate. Catalyzes the transfer of a dimethylallyl group onto the adenine at position 37 in tRNAs that read codons beginning with uridine, leading to the formation of N6-(dimethylallyl)adenosine (i(6)A). The polypeptide is tRNA dimethylallyltransferase (Thermotoga sp. (strain RQ2)).